Consider the following 132-residue polypeptide: MTMTDPVADMLTRLRNANSAYHDTVSMPYSKLKARVADILKAEGYIAGWKEEDAEVGKKLTIDLKFGPNRERSIAGVRRISKPGLRVYAKSTNLPHVLGGLGIAILSTSSGLLTDKQAGKKGVGGEVLAYVW.

The protein belongs to the universal ribosomal protein uS8 family. Part of the 30S ribosomal subunit. Contacts proteins S5 and S12.

In terms of biological role, one of the primary rRNA binding proteins, it binds directly to 16S rRNA central domain where it helps coordinate assembly of the platform of the 30S subunit. In Paenarthrobacter aurescens (strain TC1), this protein is Small ribosomal subunit protein uS8.